Consider the following 2877-residue polypeptide: Desmoplakin (2877 aa).

The disordered stretch occupies residues 1–20; the sequence is MSCNGGSHPRINTLGRMTRA. The tract at residues 1-591 is interaction with PKP1, JUP, PKP2; that stretch reads MSCNGGSHPR…DYMKTIEDLE (591 aa). Residues 1 to 1063 are globular 1; the sequence is MSCNGGSHPR…ANSENCNKNK (1063 aa). A phosphoserine mark is found at Ser22 and Ser62. Tyr65 carries the phosphotyrosine modification. Phosphothreonine is present on Thr70. Phosphoserine is present on residues Ser174, Ser175, and Ser183. Spectrin repeat units lie at residues 185–278 and 279–382; these read SGWD…HLRQ and LQNI…LKEN. A Spectrin 3a repeat occupies 383-453; sequence AAYFQFFEEA…NLVNKSKKIV (71 aa). An SH3 domain is found at 465–522; sequence NKPIILRALCDYKQDQKIVHKGDECILKDNNERSKWYVTGPGGVDMLVPSVGLIIPPP. The Spectrin 3b repeat unit spans residues 523-552; that stretch reads NPLAVDLSCKIEQYYEAILALWNQLYINMK. Spectrin repeat units lie at residues 553–634, 661–776, and 777–890; these read SLVS…IQLP, VIET…SLCS, and VRAL…DLEK. Coiled-coil stretches lie at residues 1034–1280, 1313–1354, 1395–1443, and 1473–1926; these read LKLK…AEEN, NARH…YENE, TSGY…QKAS, and KQSL…KLED. The central fibrous rod domain stretch occupies residues 1064-1952; that stretch reads FLDQNLQKYQ…QKEIDKLRQR (889 aa). Residues Ser1665, Ser1715, and Ser2031 each carry the phosphoserine modification. Positions 1953-2877 are globular 2; sequence PYGSHRETQT…YSFSSSSIGY (925 aa). A 4.5 X 38 AA tandem repeats (Domain A) region spans residues 1967-2215; the sequence is TVDSSKLVFD…LLLSVQKRSM (249 aa). Plectin repeat units lie at residues 2016–2052, 2053–2090, 2091–2128, 2129–2166, 2170–2204, 2205–2240, 2258–2295, 2296–2333, 2334–2371, 2372–2409, 2413–2447, 2463–2500, 2514–2551, 2617–2654, 2655–2692, 2731–2768, and 2769–2806; these read QPFL…PEST, VMLL…FDDR, QQIY…RETG, MRLL…RDLY, NDPR…PHTG, LLLL…PSTV, KDFL…PGTA, LELL…IEFK, EKLL…KGHG, IRLL…EELS, SDPS…EETG, SQKN…YETF, TITG…RKFF, SDPL…SITG, QRLL…QDMA, QRFL…GRAA, and QRLQ…DITG. Phosphoserine occurs at positions 2214, 2216, and 2232. Positions 2251 to 2453 are 4.5 X 38 AA tandem repeats (Domain B); sequence DEVGERIKDF…EETGLCLLPL (203 aa). Residues 2603 to 2628 form an LRR 15 repeat; it reads ISSVRNLTIRSSSLSDPLEESSPIAA. The tract at residues 2616–2828 is 4.5 X 38 AA tandem repeats (Domain C); it reads LSDPLEESSP…GLPSPYNMSA (213 aa). Phosphoserine is present on residues Ser2817 and Ser2822. Residues 2817–2877 form a disordered region; the sequence is SKGLPSPYNM…YSFSSSSIGY (61 aa). Tyr2824 carries the post-translational modification Phosphotyrosine. Ser2827 and Ser2831 each carry phosphoserine. A 6 X 4 AA tandem repeats of G-S-R-[SR] region spans residues 2830–2853; sequence GSRSGSRSGSRSGSRSGSRSGSRR. Low complexity predominate over residues 2830–2853; the sequence is GSRSGSRSGSRSGSRSGSRSGSRR. Omega-N-methylarginine occurs at positions 2832 and 2853. Ser2855 bears the Phosphoserine mark. At Thr2859 the chain carries Phosphothreonine. The span at 2862 to 2877 shows a compositional bias: low complexity; the sequence is SSYSYSYSFSSSSIGY. Phosphoserine is present on Ser2874.

The protein belongs to the plakin or cytolinker family. As to quaternary structure, homodimer. Interacts with COL17A1 (via cytoplasmic region). Interacts with DSC2. Interacts with PKP1. Interacts with PKP2. Interacts weakly with TMEM65. In terms of processing, phosphorylation at Ser-2855 increases association with intermediate filament cytokeratin, potentially facilitating interaction between desmosome junctions and intermediate filament architecture. Expressed in cardiomyocytes (at protein level).

The protein resides in the cell junction. The protein localises to the desmosome. It is found in the cell membrane. Its subcellular location is the cytoplasm. Its function is as follows. Major high molecular weight protein of desmosomes. Regulates profibrotic gene expression in cardiomyocytes via activation of the MAPK14/p38 MAPK signaling cascade and increase in TGFB1 protein abundance. This Rattus norvegicus (Rat) protein is Desmoplakin.